We begin with the raw amino-acid sequence, 215 residues long: Ribonuclease T (215 aa).

Positions valine 20–phenylalanine 194 constitute an Exonuclease domain. 4 residues coordinate Mg(2+): aspartate 23, glutamate 25, histidine 181, and aspartate 186. Histidine 181 acts as the Proton donor/acceptor in catalysis.

It belongs to the RNase T family. In terms of assembly, homodimer. Mg(2+) serves as cofactor.

Functionally, trims short 3' overhangs of a variety of RNA species, leaving a one or two nucleotide 3' overhang. Responsible for the end-turnover of tRNA: specifically removes the terminal AMP residue from uncharged tRNA (tRNA-C-C-A). Also appears to be involved in tRNA biosynthesis. The sequence is that of Ribonuclease T from Salmonella paratyphi A (strain ATCC 9150 / SARB42).